A 163-amino-acid polypeptide reads, in one-letter code: Deoxyuridine 5'-triphosphate nucleotidohydrolase (163 aa).

Belongs to the dUTPase family. Mg(2+) is required as a cofactor.

The enzyme catalyses dUTP + H2O = dUMP + diphosphate + H(+). The protein operates within pyrimidine metabolism; dUMP biosynthesis; dUMP from dCTP (dUTP route): step 2/2. In terms of biological role, this enzyme is involved in nucleotide metabolism: it produces dUMP, the immediate precursor of thymidine nucleotides and it decreases the intracellular concentration of dUTP so that uracil cannot be incorporated into DNA. This Galliformes (FAdV-8) protein is Deoxyuridine 5'-triphosphate nucleotidohydrolase.